A 299-amino-acid polypeptide reads, in one-letter code: Ribonuclease Z (299 aa).

The Zn(2+) site is built by His60, His62, Asp64, His65, His137, Asp207, and His265. Asp64 (proton acceptor) is an active-site residue.

It belongs to the RNase Z family. As to quaternary structure, homodimer. Requires Zn(2+) as cofactor.

It carries out the reaction Endonucleolytic cleavage of RNA, removing extra 3' nucleotides from tRNA precursor, generating 3' termini of tRNAs. A 3'-hydroxy group is left at the tRNA terminus and a 5'-phosphoryl group is left at the trailer molecule.. Its function is as follows. Zinc phosphodiesterase, which displays some tRNA 3'-processing endonuclease activity. Probably involved in tRNA maturation, by removing a 3'-trailer from precursor tRNA. This Nitrosopumilus maritimus (strain SCM1) protein is Ribonuclease Z.